Consider the following 459-residue polypeptide: Argininosuccinate lyase (459 aa).

Belongs to the lyase 1 family. Argininosuccinate lyase subfamily.

It localises to the cytoplasm. The catalysed reaction is 2-(N(omega)-L-arginino)succinate = fumarate + L-arginine. The protein operates within amino-acid biosynthesis; L-arginine biosynthesis; L-arginine from L-ornithine and carbamoyl phosphate: step 3/3. The polypeptide is Argininosuccinate lyase (Staphylococcus aureus (strain MRSA252)).